We begin with the raw amino-acid sequence, 109 residues long: Mannose-specific lectin (109 aa).

In terms of domain architecture, Bulb-type lectin spans 25-109; sequence MQEDCNLVLY…ARWATGTNIH (85 aa). Alpha-D-mannopyranose contacts are provided by Q26, D28, N30, Y34, D37, K38, W41, A42, N44, Q57, D59, N61, Y65, I72, W73, N76, N83, Q89, D91, N93, Y97, and W102. C29 and C52 are oxidised to a cystine.

Homotetramer; antiparallel. As to expression, detected in bulbs (at protein level).

The protein localises to the secreted. Strongly inhibited by alpha-1,6-linked mannotriose. Inhibited by various oligosaccharides of P.pastoris mannan including, Man(alpha-l,6)Man-alpha-O-Me, Man(alpha-l,2)Man, Man(alpha-l,3)Man-alpha-O-Me, Man(alpha-l,2)Man, alpha-1,2-linked mannotriose, and Man(alpha-1,6)Glc, in order of decreasing potency. Weakly inhibited by elsinotetraose. Not inhibited by maltose or nigerose. Functionally, D-mannose-binding lectin which binds alpha-D-linked mannose. Displays a high affinity for alpha-(1-6)-mannose oligomers. Able to interact with both terminal and internal alpha-D-mannosyl residues. Displays antiviral activity and therefore may contribute to defense against infections. The protein is Mannose-specific lectin of Narcissus pseudonarcissus (Daffodil).